Consider the following 1485-residue polypeptide: Cystic fibrosis transmembrane conductance regulator (1485 aa).

The Cytoplasmic segment spans residues 1–78 (MQKTPLEKAS…KLINALKRCF (78 aa)). The helical transmembrane segment at 79–99 (FWKFLFYGILLYLGEVTKAVQ) threads the bilayer. Residues 82-366 (FLFYGILLYL…WAVQTWYDSL (285 aa)) enclose the ABC transmembrane type-1 1 domain. Topologically, residues 100–123 (PLLLGRIIASYDRDNEHERSIAYY) are extracellular. The helical transmembrane segment at 124 to 147 (LAIGLCLLFVVRMLLLHPAIFGLH) threads the bilayer. The Cytoplasmic segment spans residues 148-196 (HIGMQMRIAMFSLIYKKTLKLSSKVLDKISTGQLVSLLSNNLNKFDEGL). A helical membrane pass occupies residues 197–217 (ALAHFVWIAPLQVLLLMGLLW). The Extracellular segment spans residues 218–223 (DLLQAS). A helical membrane pass occupies residues 224 to 244 (AFCGLGFLIILSLFQARLGRM). Over 245–299 (MMKYKDKRAGKINERLVITSQIIENIQSVKAYCWENAMEKIIETIRETELKLTRK) the chain is Cytoplasmic. Residues 300–320 (AAYVRYFNSSAFFFSGFFVVF) traverse the membrane as a helical segment. Over 321 to 340 (LSIVPHLLLDGISLRKIFTT) the chain is Extracellular. The chain crosses the membrane as a helical span at residues 341–359 (ISFSIVLRMAVTRQFPWAV). Over 360–860 (QTWYDSLGVI…YLRFLTAHKN (501 aa)) the chain is Cytoplasmic. ATP-binding positions include tryptophan 402, serine 435, 459 to 466 (GSTGAGKT), and glutamine 494. The ABC transporter 1 domain occupies 422 to 647 (ISNEDPSAFF…RPEFSSHLIG (226 aa)). Residues 652–833 (NAERRNSIIT…EEINEEDLKE (182 aa)) are disordered R region. Positions 750 to 760 (PRSNFLNTGPT) are enriched in polar residues. The chain crosses the membrane as a helical span at residues 861 to 881 (FIFILVFCLVIFFVEVAASSA). The 284-residue stretch at 880–1163 (SAWLWIIKRN…ASIDVDSLMR (284 aa)) folds into the ABC transmembrane type-1 2 domain. The Extracellular segment spans residues 882-923 (WLWIIKRNAPAINMTSNENVSEVSDTLSVIVTHTSFYYVFYI). Residues asparagine 894 and asparagine 900 are each glycosylated (N-linked (GlcNAc...) asparagine). The discontinuously helical transmembrane segment at 924-944 (YVGVADSLLALGIFRGLPLVH) threads the bilayer. Topologically, residues 945–995 (SLISVSKVLHKKMLHAILHAPMSTFNTMRAGRILNRFSKDTAILDDILPLS) are cytoplasmic. Residues 996–1016 (IFDLTQLVLIVIGAITVVSLL) traverse the membrane as a helical segment. The Extracellular portion of the chain corresponds to 1017 to 1018 (EP). Residues 1019–1039 (YIFLATVPVIVAFILLRSYFL) traverse the membrane as a helical segment. Residues 1040-1100 (HTSQQLKQLE…TANWFLYLST (61 aa)) are Cytoplasmic-facing. A helical membrane pass occupies residues 1101–1121 (LRWFQMTIEMIFVIFFIAVSF). The Extracellular portion of the chain corresponds to 1122 to 1135 (ISIATSGAGEEKVG). The chain crosses the membrane as a helical span at residues 1136-1156 (IVLTLAMNIMNTLQWAVNASI). At 1157–1485 (DVDSLMRSVS…TEEEVQDTRL (329 aa)) the chain is on the cytoplasmic side. One can recognise an ABC transporter 2 domain in the interval 1213–1446 (MTVKNLSANY…KSFFKQAISH (234 aa)). Residues tyrosine 1222 and 1247–1254 (GRTGSGKS) contribute to the ATP site. The disordered stretch occupies residues 1458–1485 (RNSSKRKSRPQISALQEETEEEVQDTRL). A compositionally biased stretch (acidic residues) spans 1474-1485 (EETEEEVQDTRL). Residues 1483 to 1485 (TRL) carry the PDZ-binding motif.

It belongs to the ABC transporter superfamily. ABCC family. CFTR transporter (TC 3.A.1.202) subfamily. Monomer; does not require oligomerization for channel activity. May form oligomers in the membrane. Phosphorylated; cAMP treatment promotes phosphorylation and activates the channel. Dephosphorylation decreases the ATPase activity (in vitro). Phosphorylation at PKA sites activates the channel. Phosphorylation at PKC sites enhances the response to phosphorylation by PKA.

Its subcellular location is the apical cell membrane. The protein localises to the early endosome membrane. The protein resides in the cell membrane. It is found in the recycling endosome membrane. It localises to the endoplasmic reticulum membrane. It catalyses the reaction ATP + H2O + closed Cl(-) channel = ADP + phosphate + open Cl(-) channel.. The enzyme catalyses chloride(in) = chloride(out). The catalysed reaction is hydrogencarbonate(in) = hydrogencarbonate(out). It carries out the reaction ATP + H2O = ADP + phosphate + H(+). Epithelial ion channel that plays an important role in the regulation of epithelial ion and water transport and fluid homeostasis. Mediates the transport of chloride ions across the cell membrane. Possesses an intrinsic ATPase activity and utilizes ATP to gate its channel; the passive flow of anions through the channel is gated by cycles of ATP binding and hydrolysis by the ATP-binding domains. The ion channel is also permeable to HCO(3)(-); selectivity depends on the extracellular chloride concentration. Exerts its function also by modulating the activity of other ion channels and transporters. Contributes to the regulation of the pH and the ion content of the epithelial fluid layer. The chain is Cystic fibrosis transmembrane conductance regulator from Xenopus laevis (African clawed frog).